The sequence spans 238 residues: 2,3,4,5-tetrahydropyridine-2,6-dicarboxylate N-acetyltransferase (238 aa).

The protein belongs to the transferase hexapeptide repeat family. DapH subfamily.

The catalysed reaction is (S)-2,3,4,5-tetrahydrodipicolinate + acetyl-CoA + H2O = L-2-acetamido-6-oxoheptanedioate + CoA. It functions in the pathway amino-acid biosynthesis; L-lysine biosynthesis via DAP pathway; LL-2,6-diaminopimelate from (S)-tetrahydrodipicolinate (acetylase route): step 1/3. Functionally, catalyzes the transfer of an acetyl group from acetyl-CoA to tetrahydrodipicolinate. This is 2,3,4,5-tetrahydropyridine-2,6-dicarboxylate N-acetyltransferase from Clostridioides difficile (strain 630) (Peptoclostridium difficile).